Here is a 601-residue protein sequence, read N- to C-terminus: 1-deoxy-D-xylulose-5-phosphate synthase (601 aa).

Thiamine diphosphate is bound by residues His63 and 104-106; that span reads GHS. Asp135 provides a ligand contact to Mg(2+). Thiamine diphosphate is bound by residues 136–137, Asn164, Tyr272, and Glu353; that span reads GS. Asn164 provides a ligand contact to Mg(2+).

It belongs to the transketolase family. DXPS subfamily. In terms of assembly, homodimer. It depends on Mg(2+) as a cofactor. The cofactor is thiamine diphosphate.

The catalysed reaction is D-glyceraldehyde 3-phosphate + pyruvate + H(+) = 1-deoxy-D-xylulose 5-phosphate + CO2. The protein operates within metabolic intermediate biosynthesis; 1-deoxy-D-xylulose 5-phosphate biosynthesis; 1-deoxy-D-xylulose 5-phosphate from D-glyceraldehyde 3-phosphate and pyruvate: step 1/1. Catalyzes the acyloin condensation reaction between C atoms 2 and 3 of pyruvate and glyceraldehyde 3-phosphate to yield 1-deoxy-D-xylulose-5-phosphate (DXP). This Aliarcobacter butzleri (strain RM4018) (Arcobacter butzleri) protein is 1-deoxy-D-xylulose-5-phosphate synthase.